The primary structure comprises 101 residues: Small ribosomal subunit protein uS14A (101 aa).

Composition is skewed to basic and acidic residues over residues 28 to 44 and 61 to 70; these read KETIRRPSSSEDERAEA and RNRDAADGRP. Positions 28–74 are disordered; it reads KETIRRPSSSEDERAEARAALQRLPRDASPVRLRNRDAADGRPRGHL.

The protein belongs to the universal ribosomal protein uS14 family. Part of the 30S ribosomal subunit. Contacts proteins S3 and S10.

Its function is as follows. Binds 16S rRNA, required for the assembly of 30S particles and may also be responsible for determining the conformation of the 16S rRNA at the A site. The sequence is that of Small ribosomal subunit protein uS14A from Rhodococcus jostii (strain RHA1).